Here is a 233-residue protein sequence, read N- to C-terminus: B-cell lymphoma/leukemia 10 (233 aa).

Methionine 1 carries the post-translational modification N-acetylmethionine. The CARD domain maps to 13–101 (LTEVKKDALE…QNFLIQKITD (89 aa)). Residues lysine 17, lysine 31, and lysine 63 each participate in a glycyl lysine isopeptide (Lys-Gly) (interchain with G-Cter in ubiquitin) cross-link. Polar residues predominate over residues 130-141 (TNNLSRSNSDES). 2 disordered regions span residues 130–149 (TNNL…KQRP) and 186–233 (SFSS…LSRQ). Serine 138 is modified (phosphoserine). Positions 195 to 205 (PGDPGAPPLPP) are enriched in pro residues.

As to quaternary structure, homomultimer; homooligomerized following recruitment by CARD domain-containing proteins that form a nucleating helical template that recruits BCL10 via CARD-CARD interaction. Self-associates by CARD-CARD interaction and interacts with other CARD-proteins such as CARD9, CARD10, CARD11 and CARD14. Forms a complex with CARD14 and MALT1; resulting in the formation of a CBM (CARD14-BCL10-MALT1) complex. Forms a complex with CARD11 and MALT1; resulting in the formation of a CBM (CARD11-BCL10-MALT1) complex. Forms a complex with CARD9 and MALT1; resulting in the formation of a CBM (CARD9-BCL10-MALT1) complex. Found in a membrane raft complex, at least composed of BCL10, CARD11, DPP4 and IKBKB. Binds caspase-9 with its C-terminal domain. Interacts with TRAF2 and BIRC2/c-IAP2. Interacts with PELI2 and SOCS3; these interactions may be mutually exclusive. Phosphorylated. Phosphorylation results in dissociation from TRAF2 and binding to BIRC2/c-IAP2. Phosphorylated by IKBKB/IKKB. Post-translationally, ubiquitinated via both 'Lys-63'-linked and linear ('Met-1'-linked) polyubiquitin chains in response to T-cell receptor (TCR) activation. Ubiquitination is recognized by IKBKG/NEMO, the regulatory subunit of I-kappa-B kinase (IKK), and is required for TCR-induced NF-kappa-B activation. Linear ubiquitination at Lys-17, Lys-31 and Lys-63 is mediated by RNF31/HOIP; linear ubiquitination is recognized with much higher affinity than 'Lys-63'-linked ubiquitin by IKBKG/NEMO. CARD11 is required for linear ubiquitination by HOIP by promoting the targeting of BCL10 to RNF31/HOIP. In terms of processing, proteolytically cleaved by MALT1; required for T-cell activation.

Its subcellular location is the cytoplasm. It is found in the perinuclear region. It localises to the membrane raft. Its function is as follows. Plays a key role in both adaptive and innate immune signaling by bridging CARD domain-containing proteins to immune activation. Acts by channeling adaptive and innate immune signaling downstream of CARD domain-containing proteins CARD9, CARD11 and CARD14 to activate NF-kappa-B and MAP kinase p38 (MAPK11, MAPK12, MAPK13 and/or MAPK14) pathways which stimulate expression of genes encoding pro-inflammatory cytokines and chemokines. Recruited by activated CARD domain-containing proteins: homooligomerized CARD domain-containing proteins form a nucleating helical template that recruits BCL10 via CARD-CARD interaction, thereby promoting polymerization of BCL10, subsequent recruitment of MALT1 and formation of a CBM complex. This leads to activation of NF-kappa-B and MAP kinase p38 (MAPK11, MAPK12, MAPK13 and/or MAPK14) pathways which stimulate expression of genes encoding pro-inflammatory cytokines and chemokines. Activated by CARD9 downstream of C-type lectin receptors; CARD9-mediated signals are essential for antifungal immunity. Activated by CARD11 downstream of T-cell receptor (TCR) and B-cell receptor (BCR). Promotes apoptosis, pro-caspase-9 maturation and activation of NF-kappa-B via NIK and IKK. The chain is B-cell lymphoma/leukemia 10 from Rattus norvegicus (Rat).